The chain runs to 279 residues: Nitrate import permease protein NrtB (279 aa).

Transmembrane regions (helical) follow at residues 25–45 (FLPY…ISAI), 91–111 (VAIG…VLGM), 149–169 (AIFV…AVGI), 200–220 (VPYV…AIVA), and 249–269 (IILA…LVAW). The region spanning 84 to 267 (ILISLQRVAI…LVGLSLDRLV (184 aa)) is the ABC transmembrane type-1 domain.

Belongs to the binding-protein-dependent transport system permease family. CysTW subfamily. The complex is composed of two ATP-binding proteins (NrtC and NrtD), two transmembrane proteins (NrtB) and a solute-binding protein (NrtA).

It localises to the cell inner membrane. Its function is as follows. Part of the ABC transporter complex NrtABCD involved in nitrate uptake. The complex is probably also involved in nitrite transport. Probably responsible for the translocation of the substrate across the membrane. In Synechococcus elongatus (strain ATCC 33912 / PCC 7942 / FACHB-805) (Anacystis nidulans R2), this protein is Nitrate import permease protein NrtB.